The primary structure comprises 245 residues: Probable phosphatase YcdX (245 aa).

Positions 7, 9, 15, 40, 73, 101, 131, 192, and 194 each coordinate Zn(2+).

This sequence belongs to the PHP family. As to quaternary structure, homotrimer. Zn(2+) is required as a cofactor.

This Salmonella arizonae (strain ATCC BAA-731 / CDC346-86 / RSK2980) protein is Probable phosphatase YcdX.